A 746-amino-acid polypeptide reads, in one-letter code: Polyribonucleotide nucleotidyltransferase (746 aa).

Mg(2+) contacts are provided by aspartate 493 and aspartate 499. Residues 560-619 form the KH domain; it reads PRIITLQINPEKIGALIGPGGKTIRSITEATGAQIDIEEDGRVYISTADAAAAQQAVAMV. Residues 629–698 form the S1 motif domain; sequence GDIFLGKVVR…GTGKVSLSRR (70 aa). Residues 704–746 form a disordered region; the sequence is ETAEDRRAAGAGRGLRDGGRSSGSERSGDRSPRSDDRPRPRRR. Composition is skewed to basic and acidic residues over residues 706 to 722 and 729 to 746; these read AEDRRAAGAGRGLRDGG and RSGDRSPRSDDRPRPRRR.

The protein belongs to the polyribonucleotide nucleotidyltransferase family. It depends on Mg(2+) as a cofactor.

It localises to the cytoplasm. The enzyme catalyses RNA(n+1) + phosphate = RNA(n) + a ribonucleoside 5'-diphosphate. Functionally, involved in mRNA degradation. Catalyzes the phosphorolysis of single-stranded polyribonucleotides processively in the 3'- to 5'-direction. The sequence is that of Polyribonucleotide nucleotidyltransferase from Roseiflexus castenholzii (strain DSM 13941 / HLO8).